A 130-amino-acid chain; its full sequence is Putative antitoxin VapB50 (130 aa).

In terms of biological role, possibly the antitoxin component of a type II toxin-antitoxin (TA) system. Its cognate toxin is VapC50. The chain is Putative antitoxin VapB50 from Mycobacterium tuberculosis (strain ATCC 25618 / H37Rv).